A 351-amino-acid chain; its full sequence is sn-1 oleoyl-lipid 12-desaturase (351 aa).

The disordered stretch occupies residues 1–20 (MTLSIVKSEDSSSRPSAVPS). 2 helical membrane passes run 44–62 (AWMTVIINVVMVGLGWLGI) and 68–88 (FLLPVVWVFTGTALTGFFVIG). A Histidine box-1 motif is present at residues 89–93 (HDCGH). Residues 100–120 (VWVNDWVGHILFLPIIYPFHS) traverse the membrane as a helical segment. The short motif at 125 to 129 (HNQHH) is the Histidine box-2 element. Helical transmembrane passes span 199–219 (LLVIGAAAIAFPTMILTIGVW) and 221–241 (FVKFWVIPWLVFHFWMSTFTL). A Histidine box-3 motif is present at residues 289–293 (HHVTT).

The protein belongs to the fatty acid desaturase type 2 family. The cofactor is Fe(2+).

Its subcellular location is the cellular thylakoid membrane. It carries out the reaction a 1-[(9Z)-octadecenoyl]-2-acyl-glycerolipid + 2 reduced [2Fe-2S]-[ferredoxin] + O2 + 2 H(+) = a 1-[(9Z,12Z)-octadecdienoyl]-2-acyl-glycerolipid + 2 oxidized [2Fe-2S]-[ferredoxin] + 2 H2O. It functions in the pathway lipid metabolism; polyunsaturated fatty acid biosynthesis. In terms of biological role, desaturase involved in fatty acid biosynthesis. Introduces a double bond at carbon 12 of oleoyl groups (18:1) attached to the sn-1 position of the glycerol moiety of membrane glycerolipids. The polypeptide is sn-1 oleoyl-lipid 12-desaturase (Arthrospira platensis (Spirulina platensis)).